The following is a 430-amino-acid chain: Tol-Pal system protein TolB (430 aa).

Positions 1–21 (MRRFVTLLIALLCLSATAVQA) are cleaved as a signal peptide.

The protein belongs to the TolB family. The Tol-Pal system is composed of five core proteins: the inner membrane proteins TolA, TolQ and TolR, the periplasmic protein TolB and the outer membrane protein Pal. They form a network linking the inner and outer membranes and the peptidoglycan layer.

The protein resides in the periplasm. Part of the Tol-Pal system, which plays a role in outer membrane invagination during cell division and is important for maintaining outer membrane integrity. This is Tol-Pal system protein TolB from Syntrophotalea carbinolica (strain DSM 2380 / NBRC 103641 / GraBd1) (Pelobacter carbinolicus).